A 154-amino-acid chain; its full sequence is MNPSLSVFTHWNDESNQSEIFSDPVISNCEKILRFLAPEFLHSLELSIYLVNDSLMAEINEERRGKPATTDVLSFPLYSEHPPIPVQILGEVVISMETCKKQAMEIGHGLVDEFYRLLVHGILHNFGYDHETNEEDALLMRKMEDECLDLVFAT.

The Zn(2+) site is built by His120, His124, and His130.

This sequence belongs to the endoribonuclease YbeY family. Zn(2+) is required as a cofactor.

It localises to the cytoplasm. Its function is as follows. Single strand-specific metallo-endoribonuclease involved in late-stage 70S ribosome quality control and in maturation of the 3' terminus of the 16S rRNA. The sequence is that of Endoribonuclease YbeY from Leptospira biflexa serovar Patoc (strain Patoc 1 / Ames).